Here is a 95-residue protein sequence, read N- to C-terminus: Co-chaperonin GroES (95 aa).

Belongs to the GroES chaperonin family. As to quaternary structure, heptamer of 7 subunits arranged in a ring. Interacts with the chaperonin GroEL.

The protein localises to the cytoplasm. In terms of biological role, together with the chaperonin GroEL, plays an essential role in assisting protein folding. The GroEL-GroES system forms a nano-cage that allows encapsulation of the non-native substrate proteins and provides a physical environment optimized to promote and accelerate protein folding. GroES binds to the apical surface of the GroEL ring, thereby capping the opening of the GroEL channel. This chain is Co-chaperonin GroES, found in Francisella tularensis subsp. tularensis (strain FSC 198).